Reading from the N-terminus, the 305-residue chain is Tetraspanin-12 (305 aa).

Residues 1 to 12 are Cytoplasmic-facing; that stretch reads MAREDSVKCLRC. 2 S-palmitoyl cysteine lipidation sites follow: Cys-9 and Cys-12. Residues 13-33 form a helical membrane-spanning segment; the sequence is LLYALNLLFWLMSISVLAVSA. The Extracellular segment spans residues 34–59; the sequence is WMRDYLNNVLTLTAETRVEEAVILTY. A helical membrane pass occupies residues 60–80; it reads FPVVHPVMIAVCCFLIIVGML. Over 81–89 the chain is Cytoplasmic; sequence GYCGTVKRN. Cys-83 carries the S-palmitoyl cysteine lipid modification. A helical membrane pass occupies residues 90-110; sequence LLLLAWYFGSLLVIFCVELAC. Residues 111-224 lie on the Extracellular side of the membrane; sequence GVWTYEQEIM…RGTKQLQVLR (114 aa). The chain crosses the membrane as a helical span at residues 225–245; sequence FLGISIGVTQILAMILTITLL. Residues 246–305 lie on the Cytoplasmic side of the membrane; the sequence is WALYYDRREPGTDQMMALKNDTTQHLPCHSVELLKPSLSRIFEHTSMANSFNTHFEMEEL.

This sequence belongs to the tetraspanin (TM4SF) family. Component of a complex, at least composed of TSPAN12, FZD4 and norrin (NDP). Interacts (when palmitoylated) with ADAM10. Interacts with MMP14/MT1-MMP. Post-translationally, palmitoylated; required for interaction with ADAM10. The precise position of palmitoylated residues is unclear and occurs either on Cys-9, Cys-12 and/or Cys-83.

The protein resides in the cell membrane. In terms of biological role, regulator of cell surface receptor signal transduction. Plays a central role in retinal vascularization by regulating norrin (NDP) signal transduction. Acts in concert with norrin (NDP) to promote FZD4 multimerization and subsequent activation of FZD4, leading to promote accumulation of beta-catenin (CTNNB1) and stimulate LEF/TCF-mediated transcriptional programs. Suprisingly, it only activates the norrin (NDP)-dependent activation of FZD4, while it does not activate the Wnt-dependent activation of FZD4, suggesting the existence of a Wnt-independent signaling that also promote accumulation the beta-catenin (CTNNB1). Acts as a regulator of membrane proteinases such as ADAM10 and MMP14/MT1-MMP. Activates ADAM10-dependent cleavage activity of amyloid precursor protein (APP). Activates MMP14/MT1-MMP-dependent cleavage activity. This Bos taurus (Bovine) protein is Tetraspanin-12 (TSPAN12).